A 251-amino-acid chain; its full sequence is Probable transcriptional regulatory protein BLD_0450 (251 aa).

It belongs to the TACO1 family.

It localises to the cytoplasm. In Bifidobacterium longum (strain DJO10A), this protein is Probable transcriptional regulatory protein BLD_0450.